Here is a 244-residue protein sequence, read N- to C-terminus: DNA polymerase sliding clamp (244 aa).

It belongs to the PCNA family. In terms of assembly, homotrimer. The subunits circularize to form a toroid; DNA passes through its center. Replication factor C (RFC) is required to load the toroid on the DNA.

Functionally, sliding clamp subunit that acts as a moving platform for DNA processing. Responsible for tethering the catalytic subunit of DNA polymerase and other proteins to DNA during high-speed replication. The polypeptide is DNA polymerase sliding clamp (Methanobrevibacter smithii (strain ATCC 35061 / DSM 861 / OCM 144 / PS)).